We begin with the raw amino-acid sequence, 1085 residues long: Phosphorylase b kinase regulatory subunit beta (1085 aa).

A phosphoserine mark is found at Ser-10, Ser-19, and Ser-693. 2 calmodulin-binding regions span residues Arg-760–Ser-787 and Ser-912–Arg-943. Cys-1082 carries the S-farnesyl cysteine lipid modification.

It belongs to the phosphorylase b kinase regulatory chain family. As to quaternary structure, hexadecamer of 4 heterotetramers, each composed of alpha, beta, gamma, and delta subunits. Alpha (PHKA1 or PHKA2) and beta (PHKB) are regulatory subunits, gamma (PHKG1 or PHKG2) is the catalytic subunit, and delta is calmodulin. In terms of processing, although the final Cys may be farnesylated, the terminal tripeptide is probably not removed, and the C-terminus is not methylated.

The protein localises to the cell membrane. It functions in the pathway glycan biosynthesis; glycogen metabolism. Its activity is regulated as follows. By phosphorylation of various serine residues. Phosphorylase b kinase catalyzes the phosphorylation of serine in certain substrates, including troponin I. The beta chain acts as a regulatory unit and modulates the activity of the holoenzyme in response to phosphorylation. This Mus musculus (Mouse) protein is Phosphorylase b kinase regulatory subunit beta (Phkb).